The sequence spans 518 residues: Membrane-bound lytic murein transglycosylase F (518 aa).

The N-terminal stretch at 1-21 (MKKLKINYLFIGILALLLAVA) is a signal peptide. Positions 22–269 (LWPSIPWFGK…RIEEKYLGHG (248 aa)) are non-LT domain. The segment at 270 to 518 (DDFDYVDTRT…SRKGSEEKQN (249 aa)) is LT domain. E314 is an active-site residue.

In the N-terminal section; belongs to the bacterial solute-binding protein 3 family. The protein in the C-terminal section; belongs to the transglycosylase Slt family.

The protein localises to the cell outer membrane. It carries out the reaction Exolytic cleavage of the (1-&gt;4)-beta-glycosidic linkage between N-acetylmuramic acid (MurNAc) and N-acetylglucosamine (GlcNAc) residues in peptidoglycan, from either the reducing or the non-reducing ends of the peptidoglycan chains, with concomitant formation of a 1,6-anhydrobond in the MurNAc residue.. In terms of biological role, murein-degrading enzyme that degrades murein glycan strands and insoluble, high-molecular weight murein sacculi, with the concomitant formation of a 1,6-anhydromuramoyl product. Lytic transglycosylases (LTs) play an integral role in the metabolism of the peptidoglycan (PG) sacculus. Their lytic action creates space within the PG sacculus to allow for its expansion as well as for the insertion of various structures such as secretion systems and flagella. This Escherichia coli O6:K15:H31 (strain 536 / UPEC) protein is Membrane-bound lytic murein transglycosylase F.